Here is a 116-residue protein sequence, read N- to C-terminus: Tyrosine-protein phosphatase 20 (116 aa).

In terms of domain architecture, Tyrosine-protein phosphatase spans 1-116 (WMMIVEQKCR…EIGGDAPMVV (116 aa)). Position 84 (D84) interacts with substrate.

It belongs to the protein-tyrosine phosphatase family.

The enzyme catalyses O-phospho-L-tyrosyl-[protein] + H2O = L-tyrosyl-[protein] + phosphate. This is Tyrosine-protein phosphatase 20 (STY-20) from Styela plicata (Wrinkled sea squirt).